A 616-amino-acid polypeptide reads, in one-letter code: Dihydroxy-acid dehydratase (616 aa).

Asp-81 contributes to the Mg(2+) binding site. Cys-122 provides a ligand contact to [2Fe-2S] cluster. Mg(2+) is bound by residues Asp-123 and Lys-124. Lys-124 carries the post-translational modification N6-carboxylysine. Cys-195 serves as a coordination point for [2Fe-2S] cluster. A Mg(2+)-binding site is contributed by Glu-491. The Proton acceptor role is filled by Ser-517.

It belongs to the IlvD/Edd family. Homodimer. The cofactor is [2Fe-2S] cluster. Mg(2+) serves as cofactor.

The enzyme catalyses (2R)-2,3-dihydroxy-3-methylbutanoate = 3-methyl-2-oxobutanoate + H2O. It catalyses the reaction (2R,3R)-2,3-dihydroxy-3-methylpentanoate = (S)-3-methyl-2-oxopentanoate + H2O. The protein operates within amino-acid biosynthesis; L-isoleucine biosynthesis; L-isoleucine from 2-oxobutanoate: step 3/4. It functions in the pathway amino-acid biosynthesis; L-valine biosynthesis; L-valine from pyruvate: step 3/4. Functions in the biosynthesis of branched-chain amino acids. Catalyzes the dehydration of (2R,3R)-2,3-dihydroxy-3-methylpentanoate (2,3-dihydroxy-3-methylvalerate) into 2-oxo-3-methylpentanoate (2-oxo-3-methylvalerate) and of (2R)-2,3-dihydroxy-3-methylbutanoate (2,3-dihydroxyisovalerate) into 2-oxo-3-methylbutanoate (2-oxoisovalerate), the penultimate precursor to L-isoleucine and L-valine, respectively. In Escherichia coli O8 (strain IAI1), this protein is Dihydroxy-acid dehydratase.